Here is a 188-residue protein sequence, read N- to C-terminus: ADP-ribosylation factor K (188 aa).

GTP is bound by residues 34–40 (DGAGKST), 75–79 (DVGGQ), and 134–137 (NKQD).

Belongs to the small GTPase superfamily. Arf family.

The protein resides in the golgi apparatus. Functionally, GTP-binding protein that may be involved in protein trafficking. May modulate vesicle budding and uncoating within the Golgi apparatus. The chain is ADP-ribosylation factor K (arrK) from Dictyostelium discoideum (Social amoeba).